The chain runs to 366 residues: MTWILSTGMGPHEDKYAKHERATFKKTYSSMKTLSLNHLTAKQHMLMALCRDISLLPPLTYIFTSLRKAWRVSMRTSITLYEPQSLRDAFTYFWQKLNSAYDNNSSFEGASQKAVNGDGKDSLLLSALTTARASEYLLCSLWCLVSLYLSYAILDSLMVRWIVKYSTVAAILRMFSMSLIIVTLELLLLSSLSPELDYFLHTWILISCVLTAVYIWQSYLTSDLRYIRNQEGEVQEDTNVPEETEDYEDGEDDADEDSHVVVADESTVDVPSNDSLSDNSDGGLFPVNRPSVSHSQSPKRPKKYPKKAFNFTTKRTIDLYKITVLCVVPVGLASFITMLGLLRNLFIQRLDVEQLERILHEMHPPA.

Residues 1 to 136 (MTWILSTGMG…ALTTARASEY (136 aa)) are Lumenal-facing. Residues Asn-103 and Asn-104 are each glycosylated (N-linked (GlcNAc...) asparagine). The helical transmembrane segment at 137–157 (LLCSLWCLVSLYLSYAILDSL) threads the bilayer. Topologically, residues 158 to 167 (MVRWIVKYST) are cytoplasmic. Residues 168-188 (VAAILRMFSMSLIIVTLELLL) form a helical membrane-spanning segment. Residues 189–195 (LSSLSPE) lie on the Lumenal side of the membrane. A helical membrane pass occupies residues 196-216 (LDYFLHTWILISCVLTAVYIW). The Cytoplasmic segment spans residues 217–321 (QSYLTSDLRY…TTKRTIDLYK (105 aa)). Over residues 233-256 (EVQEDTNVPEETEDYEDGEDDADE) the composition is skewed to acidic residues. Positions 233 to 305 (EVQEDTNVPE…QSPKRPKKYP (73 aa)) are disordered. Positions 272–284 (SNDSLSDNSDGGL) are enriched in low complexity. Residues 322-342 (ITVLCVVPVGLASFITMLGLL) traverse the membrane as a helical segment. The Lumenal segment spans residues 343-366 (RNLFIQRLDVEQLERILHEMHPPA).

The protein belongs to the EOS1 family. In terms of processing, N-glycosylated.

The protein resides in the endoplasmic reticulum membrane. Functionally, involved in oxidative stress resistance and N-glycosylation. This chain is N-glycosylation protein EOS1 (EOS1), found in Saccharomyces cerevisiae (strain ATCC 204508 / S288c) (Baker's yeast).